Consider the following 623-residue polypeptide: Pentatricopeptide repeat-containing protein At5g15340, mitochondrial (623 aa).

Residues 1-16 (MKCLSYQKVRLLLRHC) constitute a mitochondrion transit peptide. 11 PPR repeats span residues 42–72 (RSYL…IPLS), 75–109 (DNVD…RVEI), 110–144 (DDVS…GVLT), 145–179 (SVKV…SVVS), 180–206 (WTVV…MPER), 207–237 (NAVA…MVFR), 243–277 (NFVT…EMMM), 285–319 (DVMV…NVVT), 320–346 (WNAL…MIRE), 350–384 (DDLT…GLEP), and 385–419 (KVDH…PNEV). Residues 420–495 (VLGSLLGSCS…IPGLSSIYVN (76 aa)) form a type E motif region. Residues 496–526 (DSVHRFSSGDRSHPRTKEIYLKLNEVIERIR) form a type E(+) motif region. The segment at 527–623 (SAGYVPDVSG…GGSCSCSDYW (97 aa)) is type DYW motif.

It belongs to the PPR family. PCMP-H subfamily.

It is found in the mitochondrion. The chain is Pentatricopeptide repeat-containing protein At5g15340, mitochondrial (PCMP-H91) from Arabidopsis thaliana (Mouse-ear cress).